The following is a 47-amino-acid chain: MKLTYVLIVAMLVLVVCRADCFGRGGLCTWFDPSVCCSGICTFVDCW.

The N-terminal stretch at Met1–Ala19 is a signal peptide.

This sequence belongs to the conotoxin O1 superfamily. Post-translationally, may contain 3 disulfide bonds. Expressed by the venom duct.

The protein localises to the secreted. Functionally, probable neurotoxin. This chain is Conotoxin Cal6.18, found in Californiconus californicus (California cone).